The sequence spans 123 residues: MAPPGGKINRPRTELKKKLFKRRRVLSRDRRRKRQVVGAVIDEGLTTKHHLKKRASSARANITLSGKKRRKLLQQIRLAQKEKAAMEVEAPSKSTRTSQPQPKQQKKIKAPQDVAMEDLEDKS.

Disordered regions lie at residues 1–33 (MAPPGGKINRPRTELKKKLFKRRRVLSRDRRRK) and 82–123 (EKAA…EDKS). The segment covering 18–33 (KLFKRRRVLSRDRRRK) has biased composition (basic residues).

This is an uncharacterized protein from Mus musculus (Mouse).